We begin with the raw amino-acid sequence, 574 residues long: MSEGRTFLSQLNVFNKENYQFSSSTTKKEVSNSTVDADNGASDFEAGQQFATELDQGEKQLGILSCIGLICNRMLGTGVFAVSSTIYTLCGSVGLALIMWAVGAIIAISGLYVYMEFGTAIPKNGGEKNYLEAIFRKPKFFITCMYAAYIFFLGWAAGNSINTAIMFLTAADTEVTKWNQRGIGVAVVFFAFLINSLNVKIGLYLQNILGIFKIGIVLFISITGWVALGGGLKDGYQSHNFRNAFEGTETATAYGIVNALYSVIWSFVGYSNVNYALGEVKNPVRTLKIAGPTSMVFLAIIYIFVNIAYFAVVPKDKLISSKLILAADFFDIVFGGQAKRAAAALVGLSALGNVLSVIFSQGRIIQQLGREGVLPFSNFFASSKPFNSPMVGLFQHFIVCTVTILAPPPGDAYLLVQNLISYPMNIINFAISAGLLWIYWQRRQGKIEWNPPIKAGVFVTGFFTLSNLYLIIAPYVPPSNGESVYSSMPYWIHCVIAWGIFFFGGVYYVVWAQLLPRWGHYKLVSKDVLGEDGFWRVKIAKVYDDTIGDVDTQEDGVIETNIIEHYKSEQEKSL.

Over 1–61 the chain is Cytoplasmic; the sequence is MSEGRTFLSQ…TELDQGEKQL (61 aa). Lys28 participates in a covalent cross-link: Glycyl lysine isopeptide (Lys-Gly) (interchain with G-Cter in ubiquitin). A helical membrane pass occupies residues 62–82; that stretch reads GILSCIGLICNRMLGTGVFAV. At 83-92 the chain is on the extracellular side; sequence SSTIYTLCGS. A helical membrane pass occupies residues 93–113; the sequence is VGLALIMWAVGAIIAISGLYV. Topologically, residues 114 to 140 are cytoplasmic; sequence YMEFGTAIPKNGGEKNYLEAIFRKPKF. The chain crosses the membrane as a helical span at residues 141–161; sequence FITCMYAAYIFFLGWAAGNSI. Residues 162–182 are Extracellular-facing; sequence NTAIMFLTAADTEVTKWNQRG. A helical transmembrane segment spans residues 183–203; sequence IGVAVVFFAFLINSLNVKIGL. The Cytoplasmic segment spans residues 204 to 207; it reads YLQN. Residues 208 to 228 form a helical membrane-spanning segment; the sequence is ILGIFKIGIVLFISITGWVAL. Over 229 to 293 the chain is Extracellular; it reads GGGLKDGYQS…VRTLKIAGPT (65 aa). A helical transmembrane segment spans residues 294–314; sequence SMVFLAIIYIFVNIAYFAVVP. Residues 315–340 are Cytoplasmic-facing; the sequence is KDKLISSKLILAADFFDIVFGGQAKR. Residues 341–361 form a helical membrane-spanning segment; it reads AAAALVGLSALGNVLSVIFSQ. The Extracellular segment spans residues 362 to 418; the sequence is GRIIQQLGREGVLPFSNFFASSKPFNSPMVGLFQHFIVCTVTILAPPPGDAYLLVQN. Residues 419-439 form a helical membrane-spanning segment; that stretch reads LISYPMNIINFAISAGLLWIY. Topologically, residues 440 to 455 are cytoplasmic; it reads WQRRQGKIEWNPPIKA. Residues 456 to 476 traverse the membrane as a helical segment; it reads GVFVTGFFTLSNLYLIIAPYV. Residues 477-490 lie on the Extracellular side of the membrane; sequence PPSNGESVYSSMPY. A helical transmembrane segment spans residues 491–511; sequence WIHCVIAWGIFFFGGVYYVVW. The Cytoplasmic segment spans residues 512 to 574; sequence AQLLPRWGHY…HYKSEQEKSL (63 aa). Thr552 is modified (phosphothreonine). Ser573 bears the Phosphoserine mark.

The protein to yeast low affinity methionine permease (MUP3).

It localises to the membrane. Functionally, high affinity permease for methionine. The chain is High-affinity methionine permease (MUP1) from Saccharomyces cerevisiae (strain ATCC 204508 / S288c) (Baker's yeast).